Reading from the N-terminus, the 1368-residue chain is MAP3K epsilon protein kinase 1 (1368 aa).

The region spanning 20 to 274 is the Protein kinase domain; sequence YMLGDEIGKG…AKTLLSHPWI (255 aa). HEAT repeat units follow at residues 25–62 and 86–125; these read EIGK…EDLN and SKTK…AVYI. ATP-binding positions include 26-34 and Lys49; that span reads IGKGAYGRV. The active-site Proton acceptor is the Asp144. Residues 218–256 form an HEAT 3 repeat; sequence PYYDLQPMPALFRIVQDDNPPIPDSLSPDITDFLRQCFK. Disordered stretches follow at residues 296–415 and 430–507; these read EATA…KNTS and QTSH…PVAD. A compositionally biased stretch (acidic residues) spans 351–364; the sequence is LGEEGTDNSEDDIM. Basic and acidic residues-rich tracts occupy residues 388–399 and 470–486; these read SDFHGKSERGET and SLHD…EGKP. Residues 488–502 show a composition bias toward polar residues; that stretch reads EASTSMPTSNVNQGD. HEAT repeat units follow at residues 533-571, 628-653, 654-695, 699-737, and 750-788; these read SNDG…LFPL, IPKS…DFQE, NACL…SSPL, MFIA…VFKL, and AAKN…RVRS. The disordered stretch occupies residues 777-883; it reads GGLDGQAPRV…ISLSANRTST (107 aa). A compositionally biased stretch (polar residues) spans 791 to 808; that stretch reads LDPNNPIFGQNETSSLSM. Composition is skewed to basic and acidic residues over residues 813–826 and 836–852; these read DVLK…EEPS and SDVH…DKPR. HEAT repeat units follow at residues 903-940, 1025-1063, 1067-1105, 1112-1150, 1154-1191, 1196-1234, 1258-1281, 1282-1318, and 1348-1368; these read EQVR…HESR, ATSS…ADTT, YMCS…DPNC, ADAI…INKR, QAAE…ASRN, LRAH…DNRK, RHFV…NKTL, AVNG…HHPR, and QVLV…NTIL.

Belongs to the protein kinase superfamily. Ser/Thr protein kinase family. Interacts with SGP1. Autophosphorylated. In terms of tissue distribution, expressed in both the sporophytic and the gametophytic tissues, especially in dividing cells. Mostly present in flower buds and mature flowers. Also accumulates in embryos, in roots apices, trichomes and ovule integuments.

It is found in the cytoplasm. The protein localises to the cytoskeleton. The protein resides in the microtubule organizing center. Its subcellular location is the nucleus. It localises to the nucleolus. It is found in the cell membrane. It catalyses the reaction L-seryl-[protein] + ATP = O-phospho-L-seryl-[protein] + ADP + H(+). It carries out the reaction L-threonyl-[protein] + ATP = O-phospho-L-threonyl-[protein] + ADP + H(+). In terms of biological role, serine/threonine-protein kinase involved in the spatial and temporal control system organizing cortical activities in mitotic and postmitotic cells. Required for the normal functioning of the plasma membrane in developing pollen. Involved in the regulation of cell expansion, cell elongation, and embryo development. The polypeptide is MAP3K epsilon protein kinase 1 (Arabidopsis thaliana (Mouse-ear cress)).